A 171-amino-acid chain; its full sequence is Adenine phosphoribosyltransferase (171 aa).

Belongs to the purine/pyrimidine phosphoribosyltransferase family. Homodimer.

Its subcellular location is the cytoplasm. It carries out the reaction AMP + diphosphate = 5-phospho-alpha-D-ribose 1-diphosphate + adenine. Its pathway is purine metabolism; AMP biosynthesis via salvage pathway; AMP from adenine: step 1/1. Functionally, catalyzes a salvage reaction resulting in the formation of AMP, that is energically less costly than de novo synthesis. The polypeptide is Adenine phosphoribosyltransferase (Rhodospirillum centenum (strain ATCC 51521 / SW)).